Here is a 313-residue protein sequence, read N- to C-terminus: Ribosomal RNA small subunit methyltransferase H (313 aa).

S-adenosyl-L-methionine is bound by residues 35–37 (GGH), D55, F79, D100, and Q107.

This sequence belongs to the methyltransferase superfamily. RsmH family.

The protein localises to the cytoplasm. It carries out the reaction cytidine(1402) in 16S rRNA + S-adenosyl-L-methionine = N(4)-methylcytidine(1402) in 16S rRNA + S-adenosyl-L-homocysteine + H(+). Its function is as follows. Specifically methylates the N4 position of cytidine in position 1402 (C1402) of 16S rRNA. The protein is Ribosomal RNA small subunit methyltransferase H of Burkholderia mallei (strain NCTC 10247).